We begin with the raw amino-acid sequence, 127 residues long: Probable soluble cytochrome b562 1 (127 aa).

An N-terminal signal peptide occupies residues 1-21 (MRKIPIIAGVFSLLITSCTFA). The heme b site is built by Met28 and His123.

The protein belongs to the cytochrome b562 family. Requires heme b as cofactor.

The protein localises to the periplasm. Its function is as follows. Electron-transport protein of unknown function. The chain is Probable soluble cytochrome b562 1 (cybC1) from Yersinia pestis.